Reading from the N-terminus, the 302-residue chain is MPQSALFTGIIPPVSTIFTADGQLDKPGTAALIDDLIKAGVDGLFFLGSGGEFSQLGAEERKAIARFAIDHVDRRVPVLIGTGGTNARETIELSQHAQQAGADGIVVINPYYWKVSEANLIRYFEQVADSVTLPVMLYNFPALTGQDLTPALVKTLADSRSNIIGIKDTIDSVAHLRSMIHTVKGAHPHFTVLCGYDDHLFNTLLLGGDGAISASGNFAPQVSVNLLKAWRDGDVAKAAGYHQTLLQIPQMYQLDTPFVNVIKEAIVLCGRPVSTHVLPPASPLDEPRKAQLKTLLQQLKLC.

Residues S49 and Y112 each act as charge relay system in the active site. Catalysis depends on Y138, which acts as the Proton donor. Catalysis depends on K167, which acts as the Schiff-base intermediate with substrate.

It belongs to the DapA family. A dimer of dimers.

It localises to the cytoplasm. The enzyme catalyses 2-dehydro-3-deoxy-D-gluconate = D-glyceraldehyde + pyruvate. It carries out the reaction 2-dehydro-3-deoxy-D-arabinonate = glycolaldehyde + pyruvate. Its function is as follows. Catalyzes the formation of 2-keto-3-deoxy-gluconate (KDG) from pyruvate and glyceraldehyde. May also function as a 2-dehydro-3-deoxy-D-pentonate aldolase. Overexpression leads to increased growth (over 2 hours) in the presence of the antibiotics norfloxacin, ampicillin and streptomycin. The protein is Putative 2-dehydro-3-deoxy-D-gluconate aldolase YagE (yagE) of Escherichia coli (strain K12).